Consider the following 305-residue polypeptide: uncharacterized protein (305 aa).

The protein belongs to the IIV-6 436R family.

This is an uncharacterized protein from Acheta domesticus (House cricket).